The sequence spans 429 residues: Adenylosuccinate synthetase (429 aa).

Residues 12-18 and 40-42 contribute to the GTP site; these read GDEGKGK and GHT. The Proton acceptor role is filled by aspartate 13. Aspartate 13 and glycine 40 together coordinate Mg(2+). IMP contacts are provided by residues 13-16, 38-41, threonine 129, arginine 143, glutamine 224, threonine 239, and arginine 303; these read DEGK and NAGH. Histidine 41 acts as the Proton donor in catalysis. Residue 299-305 coordinates substrate; that stretch reads VTTGRAR. Residues arginine 305, 331–333, and 413–415 each bind GTP; these read KLD and GVG.

This sequence belongs to the adenylosuccinate synthetase family. Homodimer. Requires Mg(2+) as cofactor.

Its subcellular location is the cytoplasm. The enzyme catalyses IMP + L-aspartate + GTP = N(6)-(1,2-dicarboxyethyl)-AMP + GDP + phosphate + 2 H(+). It participates in purine metabolism; AMP biosynthesis via de novo pathway; AMP from IMP: step 1/2. Plays an important role in the de novo pathway of purine nucleotide biosynthesis. Catalyzes the first committed step in the biosynthesis of AMP from IMP. This chain is Adenylosuccinate synthetase, found in Rhodococcus jostii (strain RHA1).